We begin with the raw amino-acid sequence, 149 residues long: Myoglobin (149 aa).

Ala-2 is modified (N-acetylalanine). Positions 2–143 constitute a Globin domain; sequence ABWDKVNSVW…ICSDIEKEYK (142 aa). Position 89 (His-89) interacts with heme b.

Belongs to the globin family. In terms of assembly, monomeric.

The protein localises to the cytoplasm. Its subcellular location is the sarcoplasm. The catalysed reaction is Fe(III)-heme b-[protein] + nitric oxide + H2O = Fe(II)-heme b-[protein] + nitrite + 2 H(+). It carries out the reaction H2O2 + AH2 = A + 2 H2O. Monomeric heme protein which primary function is to store oxygen and facilitate its diffusion within muscle tissues. Reversibly binds oxygen through a pentacoordinated heme iron and enables its timely and efficient release as needed during periods of heightened demand. Depending on the oxidative conditions of tissues and cells, and in addition to its ability to bind oxygen, it also has a nitrite reductase activity whereby it regulates the production of bioactive nitric oxide. Under stress conditions, like hypoxia and anoxia, it also protects cells against reactive oxygen species thanks to its pseudoperoxidase activity. This is Myoglobin (mb) from Hemitriakis japanica (Japanese topeshark).